The sequence spans 983 residues: Kinesin-like protein KIN-14I (983 aa).

A Calponin-homology (CH) domain is found at alanine 44–glutamate 166. Polar residues-rich tracts occupy residues serine 203–lysine 214 and glutamate 278–serine 287. Disordered stretches follow at residues serine 203–proline 227 and proline 276–arginine 295. The Kinesin motor domain occupies serine 399 to valine 724. Position 481-488 (glycine 481–threonine 488) interacts with ATP. Residues valine 731–glutamate 758 are a coiled coil. Disordered regions lie at residues threonine 802 to serine 824 and threonine 921 to histidine 983. Positions serine 939–serine 951 are enriched in polar residues.

This sequence belongs to the TRAFAC class myosin-kinesin ATPase superfamily. Kinesin family. KIN-14 subfamily.

This chain is Kinesin-like protein KIN-14I, found in Arabidopsis thaliana (Mouse-ear cress).